A 61-amino-acid chain; its full sequence is Peroxidase 1 (61 aa).

The segment at 1 to 32 (DNTAKEKDSPANLSLRTCAAGDNAEQPLDPSR) is disordered. A glycan (N-linked (GlcNAc...) asparagine) is linked at asparagine 12. Residues aspartate 29, serine 31, and aspartate 36 each coordinate Ca(2+).

Belongs to the peroxidase family. Classical plant (class III) peroxidase subfamily. Requires Ca(2+) as cofactor. Heme b serves as cofactor.

Its subcellular location is the secreted. The catalysed reaction is 2 a phenolic donor + H2O2 = 2 a phenolic radical donor + 2 H2O. Its function is as follows. Removal of H(2)O(2), oxidation of toxic reductants, biosynthesis and degradation of lignin, suberization, auxin catabolism, response to environmental stresses such as wounding, pathogen attack and oxidative stress. These functions might be dependent on each isozyme/isoform in each plant tissue. The polypeptide is Peroxidase 1 (Vitis rotundifolia (Muscadine grape)).